Consider the following 304-residue polypeptide: Acetylglutamate kinase (304 aa).

Substrate-binding positions include 77–78, R99, and N201; that span reads GG.

It belongs to the acetylglutamate kinase family. ArgB subfamily.

It is found in the cytoplasm. The catalysed reaction is N-acetyl-L-glutamate + ATP = N-acetyl-L-glutamyl 5-phosphate + ADP. The protein operates within amino-acid biosynthesis; L-arginine biosynthesis; N(2)-acetyl-L-ornithine from L-glutamate: step 2/4. In terms of biological role, catalyzes the ATP-dependent phosphorylation of N-acetyl-L-glutamate. The chain is Acetylglutamate kinase from Methylibium petroleiphilum (strain ATCC BAA-1232 / LMG 22953 / PM1).